The sequence spans 123 residues: Phosphoribosyl-AMP cyclohydrolase (123 aa).

Mg(2+) is bound at residue D76. A Zn(2+)-binding site is contributed by C77. Residues D78 and D80 each contribute to the Mg(2+) site. Positions 93 and 100 each coordinate Zn(2+).

The protein belongs to the PRA-CH family. In terms of assembly, homodimer. It depends on Mg(2+) as a cofactor. The cofactor is Zn(2+).

It localises to the cytoplasm. It catalyses the reaction 1-(5-phospho-beta-D-ribosyl)-5'-AMP + H2O = 1-(5-phospho-beta-D-ribosyl)-5-[(5-phospho-beta-D-ribosylamino)methylideneamino]imidazole-4-carboxamide. It functions in the pathway amino-acid biosynthesis; L-histidine biosynthesis; L-histidine from 5-phospho-alpha-D-ribose 1-diphosphate: step 3/9. Catalyzes the hydrolysis of the adenine ring of phosphoribosyl-AMP. This is Phosphoribosyl-AMP cyclohydrolase from Methanocorpusculum labreanum (strain ATCC 43576 / DSM 4855 / Z).